A 265-amino-acid polypeptide reads, in one-letter code: Probable protein VP2 (265 aa).

3 disordered regions span residues 44–110 (RLGR…DDLS), 152–171 (STRSTSTRASRSTDGTSDVA), and 194–265 (VQNA…CSSN). Residues 48–60 (PQPPRPPGGPPGP) show a composition bias toward pro residues. Over residues 152–168 (STRSTSTRASRSTDGTS) the composition is skewed to low complexity. The span at 221–242 (GKTRPRKKPRAKQKPKKRRRYR) shows a compositional bias: basic residues. A compositionally biased stretch (low complexity) spans 243 to 265 (SSSNSSSKSNDSSDAESSTCSSN).

Phosphorylated at C-terminal serines.

This is Probable protein VP2 from Torque teno virus (isolate Human/Germany/KAV/2001) (TTV).